The primary structure comprises 98 residues: Feather keratin 4 (98 aa).

Serine 2 is modified (N-acetylserine).

This sequence belongs to the avian keratin family. In terms of assembly, the avian keratins (F-ker, S-ker, C-ker and B-ker) are a complex mixture of very similar polypeptides.

The protein is Feather keratin 4 of Gallus gallus (Chicken).